Consider the following 60-residue polypeptide: Large ribosomal subunit protein bL33 (60 aa).

Belongs to the bacterial ribosomal protein bL33 family.

In Chlorobaculum tepidum (strain ATCC 49652 / DSM 12025 / NBRC 103806 / TLS) (Chlorobium tepidum), this protein is Large ribosomal subunit protein bL33.